A 593-amino-acid chain; its full sequence is Tyrosine-protein phosphatase non-receptor type 9 (593 aa).

Met1 carries the N-acetylmethionine modification. The segment at 1 to 20 (MEPATAPRPDMAPELTPEEE) is disordered. The CRAL-TRIO domain occupies 84-243 (EEPLRSEILS…NLGGYVKIDL (160 aa)). Residues 303-574 (IYEEYEDIRR…YFCYKAILEF (272 aa)) form the Tyrosine-protein phosphatase domain. Catalysis depends on Cys515, which acts as the Phosphocysteine intermediate.

It belongs to the protein-tyrosine phosphatase family. Non-receptor class 3 subfamily.

It is found in the cytoplasm. The enzyme catalyses O-phospho-L-tyrosyl-[protein] + H2O = L-tyrosyl-[protein] + phosphate. In terms of biological role, protein-tyrosine phosphatase that could participate in the transfer of hydrophobic ligands or in functions of the Golgi apparatus. The polypeptide is Tyrosine-protein phosphatase non-receptor type 9 (Ptpn9) (Mus musculus (Mouse)).